We begin with the raw amino-acid sequence, 364 residues long: DNA polymerase IV (364 aa).

The UmuC domain maps to 6–186 (IIHIDMDAFY…LPIESFWGVG (181 aa)). 2 residues coordinate Mg(2+): aspartate 10 and aspartate 104. The active site involves glutamate 105.

Belongs to the DNA polymerase type-Y family. As to quaternary structure, monomer. It depends on Mg(2+) as a cofactor.

It is found in the cytoplasm. The catalysed reaction is DNA(n) + a 2'-deoxyribonucleoside 5'-triphosphate = DNA(n+1) + diphosphate. In terms of biological role, poorly processive, error-prone DNA polymerase involved in untargeted mutagenesis. Copies undamaged DNA at stalled replication forks, which arise in vivo from mismatched or misaligned primer ends. These misaligned primers can be extended by PolIV. Exhibits no 3'-5' exonuclease (proofreading) activity. May be involved in translesional synthesis, in conjunction with the beta clamp from PolIII. This is DNA polymerase IV from Bacteroides fragilis (strain YCH46).